A 154-amino-acid chain; its full sequence is Protein ripply (154 aa).

Positions 38 to 41 (WRPW) match the WRPW motif motif. Disordered regions lie at residues 54-86 (IRER…FQHP) and 121-154 (EDPA…PILN). Residues 85-119 (HPVKLHWSKPVYDYMYQYGKQLLDAFPVQATICIV) form a ripply homology domain region. The segment covering 121–140 (EDPAQSDDSDFESDYEDDSD) has biased composition (acidic residues).

Belongs to the ripply family. As to expression, in the late gastrula stage, expression appears in the dorsal presomitic mesoderm and in the first three pairs of nascent somites. Expressed strongly in forming somites and then expression is rapidly down-regulated except in the first somite pair where expression is maintained for a longer period. Also expressed in the presumptive notochord and in the tail bud at the 48 hour larval stage. Expression disappears by the 72 hour stage.

The protein localises to the nucleus. Functionally, may play a role in somitogenesis. This chain is Protein ripply, found in Branchiostoma belcheri (Amphioxus).